The chain runs to 386 residues: Bifunctional enzyme IspD/IspF (386 aa).

A 2-C-methyl-D-erythritol 4-phosphate cytidylyltransferase region spans residues 1–230 (MIRDERVAAI…RARSILEAPV (230 aa)). The 2-C-methyl-D-erythritol 2,4-cyclodiphosphate synthase stretch occupies residues 231–386 (AMGVGYDTHR…HAVALLVRVR (156 aa)). Residues Asp237 and His239 each coordinate a divalent metal cation. 4-CDP-2-C-methyl-D-erythritol 2-phosphate is bound by residues 237 to 239 (DTH) and 262 to 263 (HS). His270 is a binding site for a divalent metal cation. 4-CDP-2-C-methyl-D-erythritol 2-phosphate-binding positions include 284–286 (DLG), 289–293 (FPDTD), 360–363 (TTGE), Phe367, and Arg370.

It in the N-terminal section; belongs to the IspD/TarI cytidylyltransferase family. IspD subfamily. This sequence in the C-terminal section; belongs to the IspF family. The cofactor is a divalent metal cation.

The enzyme catalyses 2-C-methyl-D-erythritol 4-phosphate + CTP + H(+) = 4-CDP-2-C-methyl-D-erythritol + diphosphate. The catalysed reaction is 4-CDP-2-C-methyl-D-erythritol 2-phosphate = 2-C-methyl-D-erythritol 2,4-cyclic diphosphate + CMP. It functions in the pathway isoprenoid biosynthesis; isopentenyl diphosphate biosynthesis via DXP pathway; isopentenyl diphosphate from 1-deoxy-D-xylulose 5-phosphate: step 2/6. The protein operates within isoprenoid biosynthesis; isopentenyl diphosphate biosynthesis via DXP pathway; isopentenyl diphosphate from 1-deoxy-D-xylulose 5-phosphate: step 4/6. Bifunctional enzyme that catalyzes the formation of 4-diphosphocytidyl-2-C-methyl-D-erythritol from CTP and 2-C-methyl-D-erythritol 4-phosphate (MEP) (IspD), and catalyzes the conversion of 4-diphosphocytidyl-2-C-methyl-D-erythritol 2-phosphate (CDP-ME2P) to 2-C-methyl-D-erythritol 2,4-cyclodiphosphate (ME-CPP) with a corresponding release of cytidine 5-monophosphate (CMP) (IspF). This Anaeromyxobacter sp. (strain Fw109-5) protein is Bifunctional enzyme IspD/IspF.